The primary structure comprises 195 residues: Probable nicotinate-nucleotide adenylyltransferase (195 aa).

The protein belongs to the NadD family.

It catalyses the reaction nicotinate beta-D-ribonucleotide + ATP + H(+) = deamido-NAD(+) + diphosphate. It participates in cofactor biosynthesis; NAD(+) biosynthesis; deamido-NAD(+) from nicotinate D-ribonucleotide: step 1/1. Catalyzes the reversible adenylation of nicotinate mononucleotide (NaMN) to nicotinic acid adenine dinucleotide (NaAD). In Opitutus terrae (strain DSM 11246 / JCM 15787 / PB90-1), this protein is Probable nicotinate-nucleotide adenylyltransferase.